A 324-amino-acid chain; its full sequence is Phospho-N-acetylmuramoyl-pentapeptide-transferase (324 aa).

10 helical membrane passes run 5 to 25, 52 to 72, 77 to 97, 122 to 142, 149 to 169, 176 to 196, 201 to 221, 227 to 247, 253 to 273, and 302 to 322; these read GLLV…PLFI, PTMG…IMAI, LGAE…IGFL, VIAI…YIMI, FELG…GSNA, LDGL…IIAV, FGVA…LVFN, VFMG…VAIL, LLVI…IQVI, and VVVT…YIGV.

It belongs to the glycosyltransferase 4 family. MraY subfamily. Mg(2+) serves as cofactor.

It localises to the cell membrane. It catalyses the reaction UDP-N-acetyl-alpha-D-muramoyl-L-alanyl-gamma-D-glutamyl-meso-2,6-diaminopimeloyl-D-alanyl-D-alanine + di-trans,octa-cis-undecaprenyl phosphate = di-trans,octa-cis-undecaprenyl diphospho-N-acetyl-alpha-D-muramoyl-L-alanyl-D-glutamyl-meso-2,6-diaminopimeloyl-D-alanyl-D-alanine + UMP. Its pathway is cell wall biogenesis; peptidoglycan biosynthesis. Catalyzes the initial step of the lipid cycle reactions in the biosynthesis of the cell wall peptidoglycan: transfers peptidoglycan precursor phospho-MurNAc-pentapeptide from UDP-MurNAc-pentapeptide onto the lipid carrier undecaprenyl phosphate, yielding undecaprenyl-pyrophosphoryl-MurNAc-pentapeptide, known as lipid I. In Bacillus cereus (strain AH820), this protein is Phospho-N-acetylmuramoyl-pentapeptide-transferase.